Consider the following 92-residue polypeptide: Small ribosomal subunit protein uS19 (92 aa).

Belongs to the universal ribosomal protein uS19 family.

Its function is as follows. Protein S19 forms a complex with S13 that binds strongly to the 16S ribosomal RNA. The polypeptide is Small ribosomal subunit protein uS19 (Rhizobium johnstonii (strain DSM 114642 / LMG 32736 / 3841) (Rhizobium leguminosarum bv. viciae)).